Consider the following 381-residue polypeptide: Alkanesulfonate monooxygenase (381 aa).

It belongs to the SsuD family. Homotetramer.

The enzyme catalyses an alkanesulfonate + FMNH2 + O2 = an aldehyde + FMN + sulfite + H2O + 2 H(+). Its function is as follows. Catalyzes the desulfonation of aliphatic sulfonates. In Escherichia coli O8 (strain IAI1), this protein is Alkanesulfonate monooxygenase.